Consider the following 206-residue polypeptide: Small ribosomal subunit protein uS4B (206 aa).

The S4 RNA-binding domain occupies 96–156 (GRLDNVVYRM…EKAKKQSRIG (61 aa)).

It belongs to the universal ribosomal protein uS4 family. In terms of assembly, part of the 30S ribosomal subunit. Contacts protein S5. The interaction surface between S4 and S5 is involved in control of translational fidelity.

Functionally, one of the primary rRNA binding proteins, it binds directly to 16S rRNA where it nucleates assembly of the body of the 30S subunit. Its function is as follows. With S5 and S12 plays an important role in translational accuracy. The chain is Small ribosomal subunit protein uS4B from Psychromonas ingrahamii (strain DSM 17664 / CCUG 51855 / 37).